The primary structure comprises 158 residues: Inner membrane assembly complex subunit 17 (158 aa).

The N-terminal 15 residues, 1–15 (MFRPLVKRVVTRRFL), are a transit peptide targeting the mitochondrion. Topologically, residues 16–85 (AAANNSNAHI…KTQETSLKKF (70 aa)) are mitochondrial matrix. The chain crosses the membrane as a helical span at residues 86 to 108 (VRPAWIFLLMGSIVYLSCHYVWW). Residues 109 to 158 (KLDYEEKELEYTHKVHQLESELAALNEAHNSSVSSDKNSKRSSRKWYKFW) lie on the Mitochondrial intermembrane side of the membrane. Residues 110–140 (LDYEEKELEYTHKVHQLESELAALNEAHNSS) are a coiled coil.

Belongs to the INA17 family. Component of the inner membrane assembly (INA) complex, composed of INA17 and INA22. Interacts with a subset of F(1)F(0)-ATP synthase subunits of the F(1)-domain and the peripheral stalk.

The protein localises to the mitochondrion inner membrane. Functionally, component of the INA complex (INAC) that promotes the biogenesis of mitochondrial F(1)F(0)-ATP synthase. INAC facilitates the assembly of the peripheral stalk and promotes the assembly of the catalytic F(1)-domain with the membrane-embedded F(0)-domain. The protein is Inner membrane assembly complex subunit 17 of Kluyveromyces lactis (strain ATCC 8585 / CBS 2359 / DSM 70799 / NBRC 1267 / NRRL Y-1140 / WM37) (Yeast).